Reading from the N-terminus, the 361-residue chain is RNA 3'-terminal phosphate cyclase (361 aa).

Gln105, Pro132, Tyr295, Asp298, Gln299, and His321 together coordinate ATP. Residue His321 is the Tele-AMP-histidine intermediate of the active site.

This sequence belongs to the RNA 3'-terminal cyclase family. Type 1 subfamily.

It localises to the nucleus. Its subcellular location is the nucleoplasm. It carries out the reaction a 3'-end 3'-phospho-ribonucleotide-RNA + ATP = a 3'-end 2',3'-cyclophospho-ribonucleotide-RNA + AMP + diphosphate. Catalyzes the conversion of 3'-phosphate to a 2',3'-cyclic phosphodiester at the end of RNA. The mechanism of action of the enzyme occurs in 3 steps: (A) adenylation of the enzyme by ATP; (B) transfer of adenylate to an RNA-N3'P to produce RNA-N3'PP5'A; (C) and attack of the adjacent 2'-hydroxyl on the 3'-phosphorus in the diester linkage to produce the cyclic end product. Likely functions in some aspects of cellular RNA processing. Function plays an important role in a RNA repair and splicing pathway which controls axon regeneration in response to peripheral (PNS) and central nervous system (CNS) injury. In response to axotomy, negatively regulates splicing of Xbp1 which in turn activates downstream effectors which inhibit axon regeneration, including down-regulating the microtubule regulators ringer and futsch. This chain is RNA 3'-terminal phosphate cyclase, found in Drosophila melanogaster (Fruit fly).